The chain runs to 146 residues: Large ribosomal subunit protein uL15 (146 aa).

Positions 1-13 are enriched in basic and acidic residues; sequence MKLHELKPAEGSR. The tract at residues 1–59 is disordered; that stretch reads MKLHELKPAEGSRKVRNRVGRGTSSGNGKTSGRGQKGQKARSGGGVRLGFEGGQTPLFR. Composition is skewed to gly residues over residues 23-35 and 42-52; these read TSSG…GRGQ and SGGGVRLGFEG.

It belongs to the universal ribosomal protein uL15 family. Part of the 50S ribosomal subunit.

Binds to the 23S rRNA. This is Large ribosomal subunit protein uL15 from Streptococcus agalactiae serotype Ia (strain ATCC 27591 / A909 / CDC SS700).